A 373-amino-acid chain; its full sequence is Malate dehydrogenase, mitochondrial (373 aa).

NAD(+)-binding positions include 69–75 (GAAGGIG) and D95. The substrate site is built by R141 and R147. Residues N154 and 177–179 (ISN) each bind NAD(+). 2 residues coordinate substrate: N179 and R213. H237 (proton acceptor) is an active-site residue. Position 288 (M288) interacts with NAD(+).

Belongs to the LDH/MDH superfamily. MDH type 1 family. Homodimer.

The protein resides in the mitochondrion matrix. It catalyses the reaction (S)-malate + NAD(+) = oxaloacetate + NADH + H(+). This is Malate dehydrogenase, mitochondrial from Chlamydomonas reinhardtii (Chlamydomonas smithii).